Reading from the N-terminus, the 49-residue chain is Protein YlcJ (49 aa).

Residues 1–21 (MSLVLCFLLMSLFFMYSFVLS) form the signal peptide.

The protein is Protein YlcJ of Escherichia coli (strain K12).